The sequence spans 386 residues: MGCLFSVNSKKVRIFDTTLRDGEQAPGIDLTVDQKIRVAKRLAELGVDVIEAGFPASSDGEFEATKKILSEIGDQVEVTGLSRSVKQDIDRTIDTGLSSIHIFIATSDIHLKYKLKMTREEVLNRIYESVRYAKDHGLIVEYSPEDATRSDEEFLLKAVKTAIDAGADRINIPDTVGVMHPFKFYDLISKIVKVTGDKIVSVHCHNDFGLATANSIAGVMAGARQVHVTVNGIGERAGNASLEEVVMSLKKLLGYDVGVRTYLLYEVSRYVAELTGVPVPYFKAIVGENAFGHEAGIHVHGVIENPMTYEPISPEEVGNFRRIALGKHSGIHGLKRLLEEQGIFLDDTQLREVLKEIKSLAEAGNKVTSADAKAIAIKVINKKITA.

One can recognise a Pyruvate carboxyltransferase domain in the interval Val12–Tyr265. A divalent metal cation-binding residues include Asp21, His203, His205, and Asn239.

This sequence belongs to the alpha-IPM synthase/homocitrate synthase family. As to quaternary structure, homodimer. Requires a divalent metal cation as cofactor.

The catalysed reaction is 3-methyl-2-oxobutanoate + acetyl-CoA + H2O = (2S)-2-isopropylmalate + CoA + H(+). It functions in the pathway amino-acid biosynthesis; L-leucine biosynthesis; L-leucine from 3-methyl-2-oxobutanoate: step 1/4. With respect to regulation, is not inhibited by leucine. Catalyzes the condensation of the acetyl group of acetyl-CoA with 3-methyl-2-oxobutanoate (2-oxoisovalerate) to form 3-carboxy-3-hydroxy-4-methylpentanoate (2-isopropylmalate). Carries out the first step of the leucine biosynthesis pathway. Also displays a low citramalate synthase activity, using pyruvate as substrate, but is unable to use 2-oxoglutarate. This is 2-isopropylmalate synthase from Sulfolobus acidocaldarius (strain ATCC 33909 / DSM 639 / JCM 8929 / NBRC 15157 / NCIMB 11770).